The chain runs to 368 residues: 4-hydroxy-3-methylbut-2-en-1-yl diphosphate synthase (flavodoxin) (368 aa).

Residues cysteine 271, cysteine 274, cysteine 306, and glutamate 313 each coordinate [4Fe-4S] cluster.

It belongs to the IspG family. It depends on [4Fe-4S] cluster as a cofactor.

It carries out the reaction (2E)-4-hydroxy-3-methylbut-2-enyl diphosphate + oxidized [flavodoxin] + H2O + 2 H(+) = 2-C-methyl-D-erythritol 2,4-cyclic diphosphate + reduced [flavodoxin]. It participates in isoprenoid biosynthesis; isopentenyl diphosphate biosynthesis via DXP pathway; isopentenyl diphosphate from 1-deoxy-D-xylulose 5-phosphate: step 5/6. In terms of biological role, converts 2C-methyl-D-erythritol 2,4-cyclodiphosphate (ME-2,4cPP) into 1-hydroxy-2-methyl-2-(E)-butenyl 4-diphosphate. The sequence is that of 4-hydroxy-3-methylbut-2-en-1-yl diphosphate synthase (flavodoxin) from Haemophilus influenzae (strain PittGG).